The primary structure comprises 368 residues: Phospho-N-acetylmuramoyl-pentapeptide-transferase (368 aa).

10 consecutive transmembrane segments (helical) span residues 32-52, 79-99, 102-122, 140-160, 176-196, 207-227, 247-267, 271-291, 296-316, and 345-365; these read TGGAMVTGALFVFLFGPWIID, TPTMGGLMILSGLVVSTVLWA, LNPYVWIVLAVTLGFGFIGFY, TRLLLELLIALAACYALIRLG, VVVDLGWFFLAFGAFIIVGAG, GLAIVPVMIAAASFGMIAYLA, LAVLCGAVLGAGLGFLWFNAP, IFMGDTGSLALGGMLGSIAVA, IVLAVIGGLFVLEAVSVIVQV, and QIVIRFWIISVMLALAGLSTL.

Belongs to the glycosyltransferase 4 family. MraY subfamily. Requires Mg(2+) as cofactor.

It is found in the cell inner membrane. The enzyme catalyses UDP-N-acetyl-alpha-D-muramoyl-L-alanyl-gamma-D-glutamyl-meso-2,6-diaminopimeloyl-D-alanyl-D-alanine + di-trans,octa-cis-undecaprenyl phosphate = di-trans,octa-cis-undecaprenyl diphospho-N-acetyl-alpha-D-muramoyl-L-alanyl-D-glutamyl-meso-2,6-diaminopimeloyl-D-alanyl-D-alanine + UMP. It participates in cell wall biogenesis; peptidoglycan biosynthesis. Functionally, catalyzes the initial step of the lipid cycle reactions in the biosynthesis of the cell wall peptidoglycan: transfers peptidoglycan precursor phospho-MurNAc-pentapeptide from UDP-MurNAc-pentapeptide onto the lipid carrier undecaprenyl phosphate, yielding undecaprenyl-pyrophosphoryl-MurNAc-pentapeptide, known as lipid I. This Nitrobacter hamburgensis (strain DSM 10229 / NCIMB 13809 / X14) protein is Phospho-N-acetylmuramoyl-pentapeptide-transferase.